The primary structure comprises 869 residues: Eukaryotic translation initiation factor 3 subunit C (869 aa).

Disordered stretches follow at residues 1 to 92 and 182 to 242; these read MSRF…KSAK and IKKA…VGKG. Over residues 14 to 55 the composition is skewed to acidic residues; that stretch reads SSDEEEDLYSDDEEVQEQPEEESSEDDSEEDDDDDDDSDSSS. The segment covering 185 to 203 has biased composition (basic and acidic residues); sequence ASKEHQKDIDSFRADKDAY. Residues 607–781 enclose the PCI domain; that stretch reads FHMHINLELL…SSIIFRKGVE (175 aa). A disordered region spans residues 803–869; the sequence is NERTLETRTQ…ALGAAVGSRA (67 aa). Positions 823 to 843 are enriched in gly residues; that stretch reads GRGGRGGNRGGRGGGRGGRGG.

This sequence belongs to the eIF-3 subunit C family. In terms of assembly, component of the eukaryotic translation initiation factor 3 (eIF-3) complex.

The protein localises to the cytoplasm. In terms of biological role, component of the eukaryotic translation initiation factor 3 (eIF-3) complex, which is involved in protein synthesis of a specialized repertoire of mRNAs and, together with other initiation factors, stimulates binding of mRNA and methionyl-tRNAi to the 40S ribosome. The eIF-3 complex specifically targets and initiates translation of a subset of mRNAs involved in cell proliferation. This chain is Eukaryotic translation initiation factor 3 subunit C (nip1), found in Botryotinia fuckeliana (strain B05.10) (Noble rot fungus).